The sequence spans 296 residues: Sulfate adenylyltransferase subunit 2 (296 aa).

The protein belongs to the PAPS reductase family. CysD subfamily. In terms of assembly, heterodimer composed of CysD, the smaller subunit, and CysN.

The enzyme catalyses sulfate + ATP + H(+) = adenosine 5'-phosphosulfate + diphosphate. Its pathway is sulfur metabolism; hydrogen sulfide biosynthesis; sulfite from sulfate: step 1/3. Functionally, with CysN forms the ATP sulfurylase (ATPS) that catalyzes the adenylation of sulfate producing adenosine 5'-phosphosulfate (APS) and diphosphate, the first enzymatic step in sulfur assimilation pathway. APS synthesis involves the formation of a high-energy phosphoric-sulfuric acid anhydride bond driven by GTP hydrolysis by CysN coupled to ATP hydrolysis by CysD. The sequence is that of Sulfate adenylyltransferase subunit 2 from Rhodospirillum rubrum (strain ATCC 11170 / ATH 1.1.1 / DSM 467 / LMG 4362 / NCIMB 8255 / S1).